A 959-amino-acid chain; its full sequence is Translation initiation factor IF-2 (959 aa).

The segment covering 1–10 has biased composition (basic and acidic residues); that stretch reads MSDKTNDDKT. Residues 1–374 are disordered; that stretch reads MSDKTNDDKT…SQMQETREKI (374 aa). Positions 27-37 are enriched in polar residues; it reads EQSTVRQNFSH. Composition is skewed to low complexity over residues 63–118 and 128–138; these read AAAA…VTKP and QRPGGQQAQRP. 2 stretches are compositionally biased toward basic and acidic residues: residues 154–225 and 232–241; these read SEMD…EAAK and ARSERRDDAR. A compositionally biased stretch (low complexity) spans 246–284; sequence GARPQQAGRPQGGRPQPAGRPQQGSPRPAPIIADAAPIA. Residues 318-333 are compositionally biased toward basic and acidic residues; it reads PEVRAPKVVKGEDDRR. A tr-type G domain is found at 457–626; the sequence is SRPPVVTIMG…LLQAEMLDLK (170 aa). The tract at residues 466-473 is G1; it reads GHVDHGKT. 466 to 473 is a GTP binding site; that stretch reads GHVDHGKT. The tract at residues 491–495 is G2; it reads GITQH. The segment at 512-515 is G3; that stretch reads DTPG. GTP-binding positions include 512–516 and 566–569; these read DTPGH and NKID. The interval 566–569 is G4; sequence NKID. Residues 602–604 are G5; it reads SAK.

This sequence belongs to the TRAFAC class translation factor GTPase superfamily. Classic translation factor GTPase family. IF-2 subfamily.

The protein localises to the cytoplasm. Functionally, one of the essential components for the initiation of protein synthesis. Protects formylmethionyl-tRNA from spontaneous hydrolysis and promotes its binding to the 30S ribosomal subunits. Also involved in the hydrolysis of GTP during the formation of the 70S ribosomal complex. The protein is Translation initiation factor IF-2 of Brucella canis (strain ATCC 23365 / NCTC 10854 / RM-666).